The primary structure comprises 486 residues: UDP-N-acetylmuramoyl-L-alanyl-D-glutamate--2,6-diaminopimelate ligase (486 aa).

Serine 33 contacts UDP-N-acetyl-alpha-D-muramoyl-L-alanyl-D-glutamate. 110 to 116 (GTNGKTS) lines the ATP pocket. UDP-N-acetyl-alpha-D-muramoyl-L-alanyl-D-glutamate contacts are provided by residues 152–153 (TT), serine 179, glutamine 185, and arginine 187. Lysine 219 is modified (N6-carboxylysine). Meso-2,6-diaminopimelate is bound by residues arginine 383, 407–410 (DNPR), glycine 455, and glutamate 459. Residues 407–410 (DNPR) carry the Meso-diaminopimelate recognition motif motif.

This sequence belongs to the MurCDEF family. MurE subfamily. It depends on Mg(2+) as a cofactor. Post-translationally, carboxylation is probably crucial for Mg(2+) binding and, consequently, for the gamma-phosphate positioning of ATP.

It localises to the cytoplasm. The catalysed reaction is UDP-N-acetyl-alpha-D-muramoyl-L-alanyl-D-glutamate + meso-2,6-diaminopimelate + ATP = UDP-N-acetyl-alpha-D-muramoyl-L-alanyl-gamma-D-glutamyl-meso-2,6-diaminopimelate + ADP + phosphate + H(+). It functions in the pathway cell wall biogenesis; peptidoglycan biosynthesis. Functionally, catalyzes the addition of meso-diaminopimelic acid to the nucleotide precursor UDP-N-acetylmuramoyl-L-alanyl-D-glutamate (UMAG) in the biosynthesis of bacterial cell-wall peptidoglycan. This chain is UDP-N-acetylmuramoyl-L-alanyl-D-glutamate--2,6-diaminopimelate ligase, found in Zymomonas mobilis subsp. mobilis (strain ATCC 31821 / ZM4 / CP4).